Reading from the N-terminus, the 350-residue chain is Histidinol-phosphate aminotransferase 1 (350 aa).

Lysine 210 carries the N6-(pyridoxal phosphate)lysine modification.

It belongs to the class-II pyridoxal-phosphate-dependent aminotransferase family. Histidinol-phosphate aminotransferase subfamily. In terms of assembly, homodimer. Requires pyridoxal 5'-phosphate as cofactor.

The catalysed reaction is L-histidinol phosphate + 2-oxoglutarate = 3-(imidazol-4-yl)-2-oxopropyl phosphate + L-glutamate. It participates in amino-acid biosynthesis; L-histidine biosynthesis; L-histidine from 5-phospho-alpha-D-ribose 1-diphosphate: step 7/9. In Pseudomonas fluorescens (strain ATCC BAA-477 / NRRL B-23932 / Pf-5), this protein is Histidinol-phosphate aminotransferase 1.